We begin with the raw amino-acid sequence, 33 residues long: Photosystem II reaction center protein Psb30 (33 aa).

Residues 5–25 form a helical membrane-spanning segment; it reads LIGQLVTVALVVGAGPIIIGA.

The protein belongs to the Psb30/Ycf12 family. In terms of assembly, PSII is composed of 1 copy each of membrane proteins PsbA, PsbB, PsbC, PsbD, PsbE, PsbF, PsbH, PsbI, PsbJ, PsbK, PsbL, PsbM, PsbT, PsbX, PsbY, PsbZ, Psb30/Ycf12, peripheral proteins of the oxygen-evolving complex and a large number of cofactors. It forms dimeric complexes.

Its subcellular location is the plastid. The protein localises to the chloroplast thylakoid membrane. Functionally, a core subunit of photosystem II (PSII), probably helps stabilize the reaction center. The chain is Photosystem II reaction center protein Psb30 from Ostreococcus tauri.